The following is a 729-amino-acid chain: Rho GTPase-activating protein 28 (729 aa).

A disordered region spans residues 1-78 (MEVEDSGGVV…ASVDSSASME (78 aa)). The span at 37–49 (LSRKSIPRCRRIN) shows a compositional bias: basic residues. Low complexity predominate over residues 63–76 (SRSNSQASVDSSAS). Ser-70 is modified (phosphoserine). Phosphothreonine is present on Thr-164. The interval 180-234 (FGVSESPPSDSCEHATQLDGTKEEKDLPGVTKTSRPLPDDASLSSTTLSNGAQDE) is disordered. Over residues 221–231 (SLSSTTLSNGA) the composition is skewed to polar residues. The region spanning 384–581 (VPLTVLLDND…LMLKYQKILW (198 aa)) is the Rho-GAP domain.

Its function is as follows. GTPase activator for the Rho-type GTPases by converting them to an inactive GDP-bound state. In Mus musculus (Mouse), this protein is Rho GTPase-activating protein 28 (Arhgap28).